Reading from the N-terminus, the 197-residue chain is ATP-dependent Clp protease proteolytic subunit 1 (197 aa).

The Nucleophile role is filled by S96. H121 is an active-site residue.

This sequence belongs to the peptidase S14 family. In terms of assembly, fourteen ClpP subunits assemble into 2 heptameric rings which stack back to back to give a disk-like structure with a central cavity, resembling the structure of eukaryotic proteasomes.

The protein resides in the cytoplasm. The enzyme catalyses Hydrolysis of proteins to small peptides in the presence of ATP and magnesium. alpha-casein is the usual test substrate. In the absence of ATP, only oligopeptides shorter than five residues are hydrolyzed (such as succinyl-Leu-Tyr-|-NHMec, and Leu-Tyr-Leu-|-Tyr-Trp, in which cleavage of the -Tyr-|-Leu- and -Tyr-|-Trp bonds also occurs).. Functionally, cleaves peptides in various proteins in a process that requires ATP hydrolysis. Has a chymotrypsin-like activity. Plays a major role in the degradation of misfolded proteins. In Synechococcus sp. (strain CC9902), this protein is ATP-dependent Clp protease proteolytic subunit 1.